Here is a 23-residue protein sequence, read N- to C-terminus: Potassium channel toxin kappa-KTx 2.3 (23 aa).

2 disulfides stabilise this stretch: cysteine 4–cysteine 22 and cysteine 8–cysteine 18.

It belongs to the short scorpion toxin superfamily. Potassium channel inhibitor kappa-KTx family. Kappa-KTx 2 subfamily. Expressed by the venom gland.

The protein resides in the secreted. Functionally, decreases the amplitude of the potassium current of the rat channels Kv1.1/KCNA1 by 33% and Kv1.2/KCNA2 by 8% as well as human Kv1.3/KCNA3 by 70%. The chain is Potassium channel toxin kappa-KTx 2.3 from Opisthacanthus madagascariensis (Scorpion).